The primary structure comprises 391 residues: Processive diacylglycerol beta-glucosyltransferase (391 aa).

This sequence belongs to the glycosyltransferase 28 family. UgtP subfamily.

The protein localises to the cell membrane. It carries out the reaction a 1,2-diacyl-3-O-(beta-D-glucopyranosyl)-sn-glycerol + UDP-alpha-D-glucose = a 1,2-diacyl-3-O-(beta-D-Glc-(1-&gt;6)-beta-D-Glc)-sn-glycerol + UDP + H(+). It catalyses the reaction a 1,2-diacyl-sn-glycerol + UDP-alpha-D-glucose = a 1,2-diacyl-3-O-(beta-D-glucopyranosyl)-sn-glycerol + UDP + H(+). It participates in glycolipid metabolism; diglucosyl-diacylglycerol biosynthesis. Processive glucosyltransferase involved in the biosynthesis of both the bilayer- and non-bilayer-forming membrane glucolipids. Is able to successively transfer two glucosyl residues to diacylglycerol (DAG), thereby catalyzing the formation of beta-monoglucosyl-DAG (3-O-(beta-D-glucopyranosyl)-1,2-diacyl-sn-glycerol) and beta-diglucosyl-DAG (3-O-(beta-D-glucopyranosyl-beta-(1-&gt;6)-D-glucopyranosyl)-1,2-diacyl-sn-glycerol). Beta-diglucosyl-DAG is the predominant glycolipid found in Bacillales and is also used as a membrane anchor for lipoteichoic acid (LTA). This is Processive diacylglycerol beta-glucosyltransferase from Staphylococcus aureus (strain Mu3 / ATCC 700698).